A 211-amino-acid chain; its full sequence is MANCVVLDWQGQEAGKATLDLKVAKETTAVDLIHRAVVRQQAHSRQGTASTLTRSEVRGGGRKPYKQKGTGRARQGSIRTPLRPGGGIIFGPKPRSFSLGMNRKERRLALRTALMARINDLMIVQDFGTALKVPKTREIVEALSRFGIADDAKVLIILAQPSEIIIRSVRNIERVKVIGADQLNVFDLLNANSLVIGEKALSTIKEVYGDD.

A disordered region spans residues 40–80; it reads QQAHSRQGTASTLTRSEVRGGGRKPYKQKGTGRARQGSIRT. Residues 41–54 show a composition bias toward polar residues; that stretch reads QAHSRQGTASTLTR. A compositionally biased stretch (basic residues) spans 60-71; that stretch reads GGRKPYKQKGTG.

The protein belongs to the universal ribosomal protein uL4 family. In terms of assembly, part of the 50S ribosomal subunit.

One of the primary rRNA binding proteins, this protein initially binds near the 5'-end of the 23S rRNA. It is important during the early stages of 50S assembly. It makes multiple contacts with different domains of the 23S rRNA in the assembled 50S subunit and ribosome. Its function is as follows. Forms part of the polypeptide exit tunnel. In Prochlorococcus marinus (strain MIT 9211), this protein is Large ribosomal subunit protein uL4.